We begin with the raw amino-acid sequence, 1228 residues long: Myosin-1 (1228 aa).

Residues 1–27 are disordered; sequence MAVTKRAGRRAQGGTQPAKGAQGVKKA. One can recognise a Myosin motor domain in the interval 37-716; sequence VGVSDLTLLS…TLFALEHMRD (680 aa). 130 to 137 provides a ligand contact to ATP; it reads GESGAGKT. Serine 358 is subject to Phosphoserine. An actin-binding region spans residues 405–487; the sequence is TIGILDIYGF…PGIFAALNDA (83 aa). IQ domains lie at 720 to 740 and 741 to 768; these read HNMAARIQRAWRRYLAYKTEC and AIKIQRFWRLKRGLDGLKEIQFRDSGHK. A TH1 domain is found at 776–962; it reads RRTYSLIGYR…SGSVQVPPGA (187 aa). 3 disordered regions span residues 953 to 1040, 1053 to 1109, and 1169 to 1228; these read SGSV…AESA, QSLV…PAAP, and QGGA…DDDW. The span at 1053 to 1063 shows a compositional bias: polar residues; sequence QSLVNPRSGQG. The span at 1064 to 1092 shows a compositional bias: low complexity; that stretch reads QQQQQHHQAYQQPTAAQPAATSYSPAPAK. A compositionally biased stretch (pro residues) spans 1093–1106; the sequence is AAPPPPPPAPPAAP. The SH3 domain occupies 1109 to 1170; sequence PAEPTYKALY…PAAYLEEVQG (62 aa). Residues 1180–1194 show a composition bias toward low complexity; it reads PTAGGASAGASLAEA.

Belongs to the TRAFAC class myosin-kinesin ATPase superfamily. Myosin family. Post-translationally, phosphorylation of the TEDS site (Ser-358) is required for the polarization of the actin cytoskeleton. Phosphorylation probably activates the myosin-I ATPase activity.

It localises to the cytoplasm. The protein resides in the cytoskeleton. The protein localises to the actin patch. Type-I myosin implicated in the organization of the actin cytoskeleton. Required for proper actin cytoskeleton polarization. At the cell cortex, assembles in patch-like structures together with proteins from the actin-polymerizing machinery and promotes actin assembly. Functions as actin nucleation-promoting factor (NPF) for the Arp2/3 complex. The protein is Myosin-1 (MYO1) of Yarrowia lipolytica (strain CLIB 122 / E 150) (Yeast).